A 434-amino-acid polypeptide reads, in one-letter code: Methylenetetrahydrofolate--tRNA-(uracil-5-)-methyltransferase TrmFO (434 aa).

10-15 (GAGLAG) serves as a coordination point for FAD.

The protein belongs to the MnmG family. TrmFO subfamily. Requires FAD as cofactor.

It localises to the cytoplasm. It carries out the reaction uridine(54) in tRNA + (6R)-5,10-methylene-5,6,7,8-tetrahydrofolate + NADH + H(+) = 5-methyluridine(54) in tRNA + (6S)-5,6,7,8-tetrahydrofolate + NAD(+). The catalysed reaction is uridine(54) in tRNA + (6R)-5,10-methylene-5,6,7,8-tetrahydrofolate + NADPH + H(+) = 5-methyluridine(54) in tRNA + (6S)-5,6,7,8-tetrahydrofolate + NADP(+). Functionally, catalyzes the folate-dependent formation of 5-methyl-uridine at position 54 (M-5-U54) in all tRNAs. This chain is Methylenetetrahydrofolate--tRNA-(uracil-5-)-methyltransferase TrmFO, found in Bacillus cereus (strain G9842).